Reading from the N-terminus, the 347-residue chain is MRIEEGLKLGFKDVLIRPKRSTLKSRSEVELERQFTFKHSGWNWSGVPIIAANMDTVGTFRMAEVLASFDVLTAVHKHYTVEQWGEFVKRVPESVLRHVMVSTGTSSADFDKMKQILALSPALKFICIDVANGYSEHFVSFLQKAREACPDKVICAGNVVTGEMVEELILSGADIVKVGIGPGSVCTTRVKTGVGYPQLSAVIECADAAHGLGGQIVSDGGCSVPGDVAKAFGGGADFVMLGGMLAGHDECEGRVVEENGEKFMLFYGMSSESAMKRHVGGVAEYRAAEGKTVKLPLRGSVDNTVRDIMGGLRSACTYVGASHLKELTKRTTFIRVAEQENRVFGSN.

108 to 131 lines the NADP(+) pocket; the sequence is ADFDKMKQILALSPALKFICIDVA. K(+) contacts are provided by G181 and G183. The Thioimidate intermediate role is filled by C186. 216 to 239 is a binding site for NADP(+); it reads IVSDGGCSVPGDVAKAFGGGADFV.

It belongs to the IMPDH/GMPR family. GuaC type 1 subfamily. In terms of assembly, homotetramer.

It carries out the reaction IMP + NH4(+) + NADP(+) = GMP + NADPH + 2 H(+). Catalyzes the irreversible NADPH-dependent deamination of GMP to IMP. It functions in the conversion of nucleobase, nucleoside and nucleotide derivatives of G to A nucleotides, and in maintaining the intracellular balance of A and G nucleotides. The polypeptide is GMP reductase (Yersinia enterocolitica serotype O:8 / biotype 1B (strain NCTC 13174 / 8081)).